Consider the following 613-residue polypeptide: UvrABC system protein C (613 aa).

A GIY-YIG domain is found at 20-98 (ERPGVYLMYD…IKRHKPRYNI (79 aa)). The region spanning 209-244 (FDVIESLGHKMQQASDEFEFEKAALYRDKISALRAI) is the UVR domain.

This sequence belongs to the UvrC family. Interacts with UvrB in an incision complex.

It localises to the cytoplasm. The UvrABC repair system catalyzes the recognition and processing of DNA lesions. UvrC both incises the 5' and 3' sides of the lesion. The N-terminal half is responsible for the 3' incision and the C-terminal half is responsible for the 5' incision. This chain is UvrABC system protein C, found in Hydrogenovibrio crunogenus (strain DSM 25203 / XCL-2) (Thiomicrospira crunogena).